The primary structure comprises 860 residues: Rod cGMP-specific 3',5'-cyclic phosphodiesterase subunit alpha (860 aa).

Residue Gly-2 is modified to N-acetylglycine. 2 GAF domains span residues 73–222 (QTEK…NLIM) and 254–431 (DIER…GWSV). One can recognise a PDEase domain in the interval 483 to 816 (EEEELAEILQ…KEWKALADEY (334 aa)). Residue His-559 is the Proton donor of the active site. Residues His-563, His-599, Asp-600, and Asp-720 each contribute to the a divalent metal cation site. The segment at 821 to 860 (KVQEEKKQKQQSAKSAAAGNQPGGNPSPGGATTSKSCCIQ) is disordered. The segment covering 830 to 851 (QQSAKSAAAGNQPGGNPSPGGA) has biased composition (low complexity). At Cys-857 the chain carries Cysteine methyl ester. A lipid anchor (S-farnesyl cysteine) is attached at Cys-857. The propeptide at 858–860 (CIQ) is removed in mature form.

It belongs to the cyclic nucleotide phosphodiesterase family. As to quaternary structure, oligomer composed of two catalytic chains (alpha and beta), an inhibitory chain (gamma) and the delta chain. It depends on a divalent metal cation as a cofactor.

The protein localises to the cell membrane. It is found in the cell projection. Its subcellular location is the cilium. The protein resides in the photoreceptor outer segment. The enzyme catalyses 3',5'-cyclic GMP + H2O = GMP + H(+). In terms of biological role, rod-specific cGMP phosphodiesterase that catalyzes the hydrolysis of 3',5'-cyclic GMP. This protein participates in processes of transmission and amplification of the visual signal. The polypeptide is Rod cGMP-specific 3',5'-cyclic phosphodiesterase subunit alpha (Homo sapiens (Human)).